The following is a 207-amino-acid chain: M-zodatoxin-Lt4a (207 aa).

Residues 1 to 22 (MKFSIIALALAVAFVCVAESRS) form the signal peptide. The propeptide occupies 23–43 (EEEGYDVSEEIQAEELEEAER). The Processing quadruplet motif 1 motif lies at 40–43 (EAER). Glutamine 61 is modified (glutamine amide). The short motif at 63-66 (REDS) is the Inverted processing quadruplet motif 1 element. The propeptide occupies 63–71 (REDSEEAGR). Residues 68-71 (EAGR) carry the Processing quadruplet motif 2 motif. Position 89 is a glutamine amide (glutamine 89). The short motif at 91-94 (REDS) is the Inverted processing quadruplet motif 2 element. The propeptide occupies 91–99 (REDSEEAGR). Residues 96-99 (EAGR) carry the Processing quadruplet motif 3 motif. Glutamine 117 is modified (glutamine amide). The short motif at 119 to 122 (REDS) is the Inverted processing quadruplet motif 3 element. Residues 119–127 (REDSEEAGR) constitute a propeptide that is removed on maturation. A Processing quadruplet motif 4 motif is present at residues 124-127 (EAGR). Glutamine 145 carries the glutamine amide modification. An Inverted processing quadruplet motif 4 motif is present at residues 147 to 150 (REDS). Residues 147–155 (REDSEEAGR) constitute a propeptide that is removed on maturation. A Processing quadruplet motif 5 motif is present at residues 152-155 (EAGR). A Glutamine amide modification is found at glutamine 173. The Inverted processing quadruplet motif 5 motif lies at 175–178 (REDT). The propeptide occupies 175–182 (REDTEEAR). Residues 179 to 182 (EEAR) carry the Processing quadruplet motif 6 motif. Phenylalanine 206 is subject to Phenylalanine amide.

It belongs to the cationic peptide 03 (latarcin) family. 04 subfamily. In terms of processing, cleavage of the propeptide depends on the processing quadruplet motif (PQM) (XXXR, with at least one of X being E) and the inverted PQM (RXXX, with at least one of X being E). As to expression, expressed by the venom gland.

The protein localises to the secreted. Functionally, M-zodatoxin-Lt4a: Has antimicrobial activity against Gram-positive bacteria (A.globiformis VKM Ac-1112 (MIC=0.3 uM), and B.subtilis VKM B-501 (MIC=1.1 uM)), Gram-negative bacteria (E.coli DH5-alpha (MIC=4.5 uM), E.coli MH1 (MIC=3.2 uM), and P.aeruginosa PAO1 (MIC&gt;35 uM)), and yeasts (P.pastoris GS115 (MIC=36 uM), and S.cerevisiae Y190 (MIC=18 uM)). Does not have hemolytic activity against rabbit erythrocytes. Causes paralysis, but is not lethal when injected into insect (M.domestica) larvae. Shows no antimicrobial activity against Gram-positive bacterium B.subtilis B-501 or Gram-negative bacterium E.coli DH5-alpha at concentrations up to 20 uM. In terms of biological role, shows no antimicrobial activity against Gram-positive bacterium B.subtilis B-501 or Gram-negative bacterium E.coli DH5-alpha at concentrations up to 20 uM. Shows no toxicity towards insect (S.carnaria) larvae. In Lachesana tarabaevi (Spider), this protein is M-zodatoxin-Lt4a.